Reading from the N-terminus, the 92-residue chain is Cell wall protein CWP2 (92 aa).

The first 20 residues, 1 to 20 (MQFSTVASVAFVALANFVAA), serve as a signal peptide directing secretion. One copy of the PIR1/2/3 repeat lies at 24–37 (AAISQITDGQIQAT). Residues 41–60 (TTEATTTAAPSSTVETVSPS) form a disordered region. Asn-71 is lipidated: GPI-anchor amidated asparagine. The propeptide at 72 to 92 (GAAKAAVGMGAGALAAAAMLL) is removed in mature form.

It belongs to the SRP1/TIP1 family. Post-translationally, extensively O-glycosylated. In terms of processing, the GPI-anchor is attached to the protein in the endoplasmic reticulum and serves to target the protein to the cell surface. There, the glucosamine-inositol phospholipid moiety is cleaved off and the GPI-modified mannoprotein is covalently attached via its lipidless GPI glycan remnant to the 1,6-beta-glucan of the outer cell wall layer. Covalently linked to beta-1,3-glucan of the inner cell wall layer via an alkali-sensitive ester linkage between the gamma-carboxyl group of glutamic acids, arising from a specific glutamine within the PIR1/2/3 repeat, and hydroxyl groups of glucoses of beta-1,3-glucan chains.

Its subcellular location is the secreted. It is found in the cell wall. The protein resides in the membrane. In terms of biological role, component of the cell wall. The chain is Cell wall protein CWP2 (CWP2) from Saccharomyces cerevisiae (strain ATCC 204508 / S288c) (Baker's yeast).